The primary structure comprises 67 residues: Protein AaeX (67 aa).

Transmembrane regions (helical) follow at residues 3–23 and 47–67; these read LFPV…ELLL and PALF…RLFV.

Belongs to the AaeX family.

It is found in the cell membrane. The chain is Protein AaeX from Escherichia coli O157:H7.